We begin with the raw amino-acid sequence, 125 residues long: MPKKSFQRTERISVQIRRDLGAFVQAAVRDHGLPSMSVSDVEVTRDMAHAKVFVTVLQAERSFEAVAGLKALARELRMQLAQTMRLRFVPELHFHYDDSLDRGERINTLLRDLIPPADAEKDESG.

The protein belongs to the RbfA family. Monomer. Binds 30S ribosomal subunits, but not 50S ribosomal subunits or 70S ribosomes.

The protein localises to the cytoplasm. One of several proteins that assist in the late maturation steps of the functional core of the 30S ribosomal subunit. Associates with free 30S ribosomal subunits (but not with 30S subunits that are part of 70S ribosomes or polysomes). Required for efficient processing of 16S rRNA. May interact with the 5'-terminal helix region of 16S rRNA. This Xylella fastidiosa (strain M12) protein is Ribosome-binding factor A.